Consider the following 240-residue polypeptide: Ribosomal RNA small subunit methyltransferase G (240 aa).

Residues G80, F85, 131–132 (AE), and R150 contribute to the S-adenosyl-L-methionine site.

This sequence belongs to the methyltransferase superfamily. RNA methyltransferase RsmG family.

The protein localises to the cytoplasm. Functionally, specifically methylates the N7 position of a guanine in 16S rRNA. The chain is Ribosomal RNA small subunit methyltransferase G from Dictyoglomus thermophilum (strain ATCC 35947 / DSM 3960 / H-6-12).